The primary structure comprises 413 residues: Putative competence-damage inducible protein (413 aa).

It belongs to the CinA family.

The chain is Putative competence-damage inducible protein from Desulforudis audaxviator (strain MP104C).